Here is a 473-residue protein sequence, read N- to C-terminus: Pre-mRNA-splicing factor PRP46 (473 aa).

A compositionally biased stretch (polar residues) spans 1–10 (MSTSLETPSG). Disordered regions lie at residues 1–21 (MSTSLETPSGASAGPSIVASG) and 103–126 (GPNVKLIGGPEAEKASSSTPQAVA). 7 WD repeats span residues 180 to 219 (GHMGWVRAVAMDPGNQWFATGAGDRVIKIWDLASGELKLS), 222 to 261 (GHISTIRGLAVSDRHPYLFSCAEDKMVKCWDLETNKVIRH), 264 to 303 (GHFSGVYSLSVHPTLDVLVTGGRDASVRVWDMRTRANIFT), 306 to 347 (GHTS…NTLT), 349 to 388 (HKKSVRALAIHPTEYSFASASSGGNNIKKWKCPEGIFVNN), 391 to 429 (GHEAIINTLSINSENVLFSGADNGTLTLWDYKTGLPFQH), and 440 to 473 (DAEAGVFCSTFDKTGTRLITGGADKTIKVYSEQA).

This sequence belongs to the WD repeat PRL1/PRL2 family. As to quaternary structure, associated with the spliceosome.

The protein localises to the cytoplasm. The protein resides in the nucleus. Involved in pre-mRNA splicing and required for cell cycle progression at G2/M. The sequence is that of Pre-mRNA-splicing factor PRP46 (PRP46) from Cryptococcus neoformans var. neoformans serotype D (strain JEC21 / ATCC MYA-565) (Filobasidiella neoformans).